The primary structure comprises 232 residues: MLKLTDITWLYHHLPMRFSLTVERGEQVAILGPSGAGKSTLLNLIAGFLTPASGALTIDGVDHTTTPPSRRPVSMLFQENNLFSHLTVAQNIGLGLNPGLKLNAVQQEKMHAIARQMGIDNLMARLPGELSGGQRQRVALARCLVREQPILLLDEPFSALDPALRQEMLTLVSTSCQQQKMTLLMVSHSVEDAARIATRSVVVADGRIAWQGMTNELLSGKASASALLGITG.

In terms of domain architecture, ABC transporter spans leucine 2–isoleucine 230. Position 32-39 (glycine 32–serine 39) interacts with ATP.

The protein belongs to the ABC transporter superfamily. Thiamine importer (TC 3.A.1.19.1) family. The complex is composed of two ATP-binding proteins (ThiQ), two transmembrane proteins (ThiP) and a solute-binding protein (ThiB).

The protein localises to the cell inner membrane. It carries out the reaction thiamine(out) + ATP + H2O = thiamine(in) + ADP + phosphate + H(+). Its function is as follows. Part of the ABC transporter complex ThiBPQ involved in thiamine import. Responsible for energy coupling to the transport system. The polypeptide is Thiamine import ATP-binding protein ThiQ (Escherichia coli O157:H7).